Consider the following 1222-residue polypeptide: ATP-dependent helicase/nuclease subunit A (1222 aa).

Positions 39-495 (QKRTAQQIEA…ILLKENFRSQ (457 aa)) constitute a UvrD-like helicase ATP-binding domain. Residue 60–67 (ASAGSGKT) participates in ATP binding. Residues 524–810 (QLIAGSHAQT…NLMTIHKSKG (287 aa)) enclose the UvrD-like helicase C-terminal domain.

This sequence belongs to the helicase family. AddA subfamily. Heterodimer of AddA and AddB/RexB. It depends on Mg(2+) as a cofactor.

It catalyses the reaction Couples ATP hydrolysis with the unwinding of duplex DNA by translocating in the 3'-5' direction.. It carries out the reaction ATP + H2O = ADP + phosphate + H(+). Functionally, the heterodimer acts as both an ATP-dependent DNA helicase and an ATP-dependent, dual-direction single-stranded exonuclease. Recognizes the chi site generating a DNA molecule suitable for the initiation of homologous recombination. The AddA nuclease domain is required for chi fragment generation; this subunit has the helicase and 3' -&gt; 5' nuclease activities. This Streptococcus pyogenes serotype M49 (strain NZ131) protein is ATP-dependent helicase/nuclease subunit A.